We begin with the raw amino-acid sequence, 287 residues long: Phosphatidylglycerol--prolipoprotein diacylglyceryl transferase (287 aa).

4 helical membrane passes run valine 26–alanine 46, phenylalanine 71–tyrosine 91, isoleucine 106–valine 126, and glycine 132–phenylalanine 152. Arginine 154 serves as a coordination point for a 1,2-diacyl-sn-glycero-3-phospho-(1'-sn-glycerol). The next 3 membrane-spanning stretches (helical) occupy residues serine 187–alanine 207, glycine 217–phenylalanine 237, and tryptophan 251–tryptophan 271.

It belongs to the Lgt family.

It localises to the cell inner membrane. It carries out the reaction L-cysteinyl-[prolipoprotein] + a 1,2-diacyl-sn-glycero-3-phospho-(1'-sn-glycerol) = an S-1,2-diacyl-sn-glyceryl-L-cysteinyl-[prolipoprotein] + sn-glycerol 1-phosphate + H(+). It participates in protein modification; lipoprotein biosynthesis (diacylglyceryl transfer). Catalyzes the transfer of the diacylglyceryl group from phosphatidylglycerol to the sulfhydryl group of the N-terminal cysteine of a prolipoprotein, the first step in the formation of mature lipoproteins. The chain is Phosphatidylglycerol--prolipoprotein diacylglyceryl transferase from Allorhizobium ampelinum (strain ATCC BAA-846 / DSM 112012 / S4) (Agrobacterium vitis (strain S4)).